Here is a 168-residue protein sequence, read N- to C-terminus: Xanthine-guanine phosphoribosyltransferase (168 aa).

Residues 43-44 and 102-110 contribute to the 5-phospho-alpha-D-ribose 1-diphosphate site; these read RG and DDLVDTGAT. Residue Asp-103 coordinates Mg(2+). Residues Asp-106 and Ile-149 each contribute to the guanine site. Residues Asp-106 and Ile-149 each coordinate xanthine. GMP is bound by residues 106 to 110 and 148 to 149; these read DTGAT and WI.

It belongs to the purine/pyrimidine phosphoribosyltransferase family. XGPT subfamily. Homotetramer. Mg(2+) is required as a cofactor.

The protein resides in the cell inner membrane. It catalyses the reaction GMP + diphosphate = guanine + 5-phospho-alpha-D-ribose 1-diphosphate. The catalysed reaction is XMP + diphosphate = xanthine + 5-phospho-alpha-D-ribose 1-diphosphate. The enzyme catalyses IMP + diphosphate = hypoxanthine + 5-phospho-alpha-D-ribose 1-diphosphate. Its pathway is purine metabolism; GMP biosynthesis via salvage pathway; GMP from guanine: step 1/1. It functions in the pathway purine metabolism; XMP biosynthesis via salvage pathway; XMP from xanthine: step 1/1. Functionally, purine salvage pathway enzyme that catalyzes the transfer of the ribosyl-5-phosphate group from 5-phospho-alpha-D-ribose 1-diphosphate (PRPP) to the N9 position of the 6-oxopurines guanine and xanthine to form the corresponding ribonucleotides GMP (guanosine 5'-monophosphate) and XMP (xanthosine 5'-monophosphate), with the release of PPi. To a lesser extent, also acts on hypoxanthine. In Nitrobacter winogradskyi (strain ATCC 25391 / DSM 10237 / CIP 104748 / NCIMB 11846 / Nb-255), this protein is Xanthine-guanine phosphoribosyltransferase.